The chain runs to 328 residues: tRNA uridine(34) hydroxylase (328 aa).

A Rhodanese domain is found at 130–224; it reads LDEDTVVLDT…YGKDPEVQGE (95 aa). The active-site Cysteine persulfide intermediate is Cys184.

The protein belongs to the TrhO family.

It catalyses the reaction uridine(34) in tRNA + AH2 + O2 = 5-hydroxyuridine(34) in tRNA + A + H2O. Its function is as follows. Catalyzes oxygen-dependent 5-hydroxyuridine (ho5U) modification at position 34 in tRNAs. The chain is tRNA uridine(34) hydroxylase from Streptococcus pyogenes serotype M3 (strain SSI-1).